The primary structure comprises 103 residues: Putative glutaredoxin-C12 (103 aa).

The 102-residue stretch at 1-102 (MERVRDLASE…QMLKASNAIW (102 aa)) folds into the Glutaredoxin domain. Cys21 and Cys24 are joined by a disulfide.

The protein belongs to the glutaredoxin family. CC-type subfamily.

Its subcellular location is the cytoplasm. Its function is as follows. Has a glutathione-disulfide oxidoreductase activity in the presence of NADPH and glutathione reductase. Reduces low molecular weight disulfides and proteins. In Arabidopsis thaliana (Mouse-ear cress), this protein is Putative glutaredoxin-C12 (GRXC12).